The following is a 77-amino-acid chain: Conotoxin King-Kong 1 (77 aa).

Residues 1 to 22 form the signal peptide; it reads MKLTCMMIVAVLFLTAWTFATA. Residues 23–49 constitute a propeptide that is removed on maturation; it reads DDSSNGLENLFSKAHHEMKNPEASKLN. Intrachain disulfides connect Cys-52-Cys-67, Cys-59-Cys-71, and Cys-66-Cys-76. At Met-61 the chain carries Methionine sulfoxide; partial.

Belongs to the conotoxin O1 superfamily. In terms of tissue distribution, expressed by the venom duct.

Its subcellular location is the secreted. In Conus textile (Cloth-of-gold cone), this protein is Conotoxin King-Kong 1.